The sequence spans 49 residues: Small ribosomal subunit protein eS31 (49 aa).

Zn(2+) is bound by residues Cys21, Cys24, Cys39, and Cys42. The C4-type zinc finger occupies 21–42; the sequence is CPRCGPGVFLADHKNRLACGKC.

It belongs to the eukaryotic ribosomal protein eS31 family. As to quaternary structure, part of the 30S ribosomal subunit. Zn(2+) is required as a cofactor.

The polypeptide is Small ribosomal subunit protein eS31 (Methanosarcina mazei (strain ATCC BAA-159 / DSM 3647 / Goe1 / Go1 / JCM 11833 / OCM 88) (Methanosarcina frisia)).